The following is a 254-amino-acid chain: Phosphoribosylaminoimidazole-succinocarboxamide synthase (254 aa).

Belongs to the SAICAR synthetase family.

It carries out the reaction 5-amino-1-(5-phospho-D-ribosyl)imidazole-4-carboxylate + L-aspartate + ATP = (2S)-2-[5-amino-1-(5-phospho-beta-D-ribosyl)imidazole-4-carboxamido]succinate + ADP + phosphate + 2 H(+). The protein operates within purine metabolism; IMP biosynthesis via de novo pathway; 5-amino-1-(5-phospho-D-ribosyl)imidazole-4-carboxamide from 5-amino-1-(5-phospho-D-ribosyl)imidazole-4-carboxylate: step 1/2. The chain is Phosphoribosylaminoimidazole-succinocarboxamide synthase from Brucella abortus (strain S19).